A 377-amino-acid polypeptide reads, in one-letter code: S-adenosylmethionine decarboxylase proenzyme 2 (377 aa).

Active-site residues include Glu-24 and Glu-27. Ser-84 functions as the Schiff-base intermediate with substrate; via pyruvic acid in the catalytic mechanism. The residue at position 84 (Ser-84) is a Pyruvic acid (Ser); by autocatalysis. The Proton donor; for catalytic activity role is filled by Cys-98. Catalysis depends on proton acceptor; for processing activity residues Ser-246 and His-259.

The protein belongs to the eukaryotic AdoMetDC family. Requires pyruvate as cofactor. Is synthesized initially as an inactive proenzyme. Formation of the active enzyme involves a self-maturation process in which the active site pyruvoyl group is generated from an internal serine residue via an autocatalytic post-translational modification. Two non-identical subunits are generated from the proenzyme in this reaction, and the pyruvate is formed at the N-terminus of the alpha chain, which is derived from the carboxyl end of the proenzyme. The post-translation cleavage follows an unusual pathway, termed non-hydrolytic serinolysis, in which the side chain hydroxyl group of the serine supplies its oxygen atom to form the C-terminus of the beta chain, while the remainder of the serine residue undergoes an oxidative deamination to produce ammonia and the pyruvoyl group blocking the N-terminus of the alpha chain.

The enzyme catalyses S-adenosyl-L-methionine + H(+) = S-adenosyl 3-(methylsulfanyl)propylamine + CO2. It participates in amine and polyamine biosynthesis; S-adenosylmethioninamine biosynthesis; S-adenosylmethioninamine from S-adenosyl-L-methionine: step 1/1. In Dianthus caryophyllus (Carnation), this protein is S-adenosylmethionine decarboxylase proenzyme 2 (SAMDC2).